Reading from the N-terminus, the 445-residue chain is Homoserine O-succinyltransferase (445 aa).

The region spanning 45 to 411 is the AB hydrolase-1 domain; the sequence is NAVLICHALS…APHGHDSFLF (367 aa). Ser153 serves as the catalytic Nucleophile. Arg223 lines the substrate pocket. Active-site residues include Asp373 and His406. Residue Asp407 participates in substrate binding.

This sequence belongs to the AB hydrolase superfamily. MetX family. Homodimer.

The protein localises to the cytoplasm. It carries out the reaction L-homoserine + succinyl-CoA = O-succinyl-L-homoserine + CoA. It participates in amino-acid biosynthesis; L-methionine biosynthesis via de novo pathway; O-succinyl-L-homoserine from L-homoserine: step 1/1. Transfers a succinyl group from succinyl-CoA to L-homoserine, forming succinyl-L-homoserine. The polypeptide is Homoserine O-succinyltransferase (Psychrobacter arcticus (strain DSM 17307 / VKM B-2377 / 273-4)).